We begin with the raw amino-acid sequence, 196 residues long: Probable signal peptidase I-1 (196 aa).

Residues 1–16 (MQNSPIPSPWQFIKEN) lie on the Cytoplasmic side of the membrane. A helical membrane pass occupies residues 17 to 35 (IPLLMVALVLALLLRFFVA). Topologically, residues 36–196 (EPRYIPSDSM…FVPARTIINT (161 aa)) are periplasmic. Residues Ser-44 and Lys-94 contribute to the active site.

Belongs to the peptidase S26 family.

Its subcellular location is the cell membrane. It catalyses the reaction Cleavage of hydrophobic, N-terminal signal or leader sequences from secreted and periplasmic proteins.. The sequence is that of Probable signal peptidase I-1 (lepB1) from Synechocystis sp. (strain ATCC 27184 / PCC 6803 / Kazusa).